Here is a 414-residue protein sequence, read N- to C-terminus: Esterase FrsA (414 aa).

Belongs to the FrsA family.

The enzyme catalyses a carboxylic ester + H2O = an alcohol + a carboxylate + H(+). Its function is as follows. Catalyzes the hydrolysis of esters. In Salmonella choleraesuis (strain SC-B67), this protein is Esterase FrsA.